We begin with the raw amino-acid sequence, 1006 residues long: Probable beta-galactosidase A (1006 aa).

Residues 1-18 (MKLLSVCAIALLAAQAAG) form the signal peptide. Substrate contacts are provided by Tyr96, Asn140, Ala141, and Glu142. The N-linked (GlcNAc...) asparagine glycan is linked to Asn156. Asn199 lines the substrate pocket. Catalysis depends on Glu200, which acts as the Proton donor. A disulfide bridge connects residues Cys205 and Cys206. Substrate is bound at residue Tyr260. A disulfide bridge connects residues Cys266 and Cys315. Residue Glu298 is the Nucleophile of the active site. Tyr364 is a substrate binding site. N-linked (GlcNAc...) asparagine glycosylation is found at Asn373, Asn402, Asn422, Asn622, Asn760, Asn777, and Asn914.

It belongs to the glycosyl hydrolase 35 family.

The protein resides in the secreted. The catalysed reaction is Hydrolysis of terminal non-reducing beta-D-galactose residues in beta-D-galactosides.. Cleaves beta-linked terminal galactosyl residues from gangliosides, glycoproteins, and glycosaminoglycans. The protein is Probable beta-galactosidase A (lacA) of Aspergillus fumigatus (strain CBS 144.89 / FGSC A1163 / CEA10) (Neosartorya fumigata).